The primary structure comprises 260 residues: UPF0246 protein SCO2297 (260 aa).

This sequence belongs to the UPF0246 family.

This Streptomyces coelicolor (strain ATCC BAA-471 / A3(2) / M145) protein is UPF0246 protein SCO2297.